A 67-amino-acid chain; its full sequence is Cold shock-like protein CspA (67 aa).

A CSD domain is found at 4–64; it reads GVVKWFNAEK…GPKGPQATKI (61 aa).

Its subcellular location is the cytoplasm. The sequence is that of Cold shock-like protein CspA (cspA) from Bordetella bronchiseptica (strain ATCC BAA-588 / NCTC 13252 / RB50) (Alcaligenes bronchisepticus).